The chain runs to 87 residues: Protein anon-73B1 (87 aa).

Residues 25–47 (LLIRYGLYVGALFQFVCISAAVL) form a helical membrane-spanning segment. Residues 51–87 (NPDGQSNPESGEVTEREGEPVRTRLHKIRKLEKKKRR) are disordered. The segment covering 63 to 72 (VTEREGEPVR) has biased composition (basic and acidic residues). The segment covering 73–87 (TRLHKIRKLEKKKRR) has biased composition (basic residues).

This sequence belongs to the UPF0239 family.

The protein resides in the membrane. The sequence is that of Protein anon-73B1 (anon-73B1) from Drosophila melanogaster (Fruit fly).